The primary structure comprises 358 residues: Peptide chain release factor 1 (358 aa).

Glutamine 233 is subject to N5-methylglutamine.

The protein belongs to the prokaryotic/mitochondrial release factor family. Post-translationally, methylated by PrmC. Methylation increases the termination efficiency of RF1.

It localises to the cytoplasm. Peptide chain release factor 1 directs the termination of translation in response to the peptide chain termination codons UAG and UAA. This is Peptide chain release factor 1 from Lysinibacillus sphaericus (strain C3-41).